The chain runs to 114 residues: Large ribosomal subunit protein bL19 (114 aa).

Belongs to the bacterial ribosomal protein bL19 family.

Functionally, this protein is located at the 30S-50S ribosomal subunit interface and may play a role in the structure and function of the aminoacyl-tRNA binding site. In Thermoanaerobacter sp. (strain X514), this protein is Large ribosomal subunit protein bL19.